The following is a 774-amino-acid chain: MKTNNLGYPRIGSNRELKKASELYWAGKISADELLDAGKEIRLKNWYLQSEAGVDLIPSNDFSFYDQVLDLTLAVGAIPQRYHELAKSNSSLDLYFAMARGSQKNGQDVVAMEMTKWFDTNYHYIVPEFTKNQKFELFSEKILNEFKEANAVGIKTKPVLIGPVSYLLLGKEKEEGFNRIDLIDALLPVYFEILEKLQIENAEYIQLDEPFLALNLTDKERNVFTKVYNEINVRFPKLKIVLANYFDCFGENLETALALPVDTFHLDLVRCQLQLDDILESGKLASNVNLSLGVVDGRNIWKNDFKKSLELIKKAADALGENRILLAPSCSLIHSPCDLDLETNDQTLTPEIKQWLAFAKQKINEVVLLKQFASGEVNPKNSADYERNVIANENRKTSKLIHNNEVKARTAGITAADDKRKSAFASRRKSQIKALNLPLFPTTTIGSFPQTTEVRSWRAKFKKGELTTEQYNDLIEKETEAAIRFQEETGIDVLVHGEFERNDMVEYFGEQLDGFTFTKNGWVQSYGSRCVKPPVIYGDVSRPNPMTVKWSKYAQSLTSKWVKGMLTGPVTILQWSFVRNDQPRSETCTQIALAVRDEVVDLEKAGIKIIQIDEPAIREGLPLRKEEWAKYLDWAVKAFRISASGVNDDTQIHPHMCYSEFNDIIQNIADMDADVITIECSRSQMELLDAFANFKYPNEIGPGVYDIHSPRVPSSKEMVRLLEKASAVIPVDQLWVNPDCGLKTRHWNETKKALIEMVAAAQEMRKAVENPVTE.

5-methyltetrahydropteroyltri-L-glutamate is bound by residues 15–18 (RELK) and K116. L-homocysteine is bound by residues 445 to 447 (IGS) and E498. Residues 445 to 447 (IGS) and E498 each bind L-methionine. Residues 529-530 (RC) and W575 each bind 5-methyltetrahydropteroyltri-L-glutamate. Position 613 (D613) interacts with L-homocysteine. D613 contacts L-methionine. Residue E619 coordinates 5-methyltetrahydropteroyltri-L-glutamate. The Zn(2+) site is built by H655, C657, and E679. The active-site Proton donor is H708. A Zn(2+)-binding site is contributed by C740.

It belongs to the vitamin-B12 independent methionine synthase family. It depends on Zn(2+) as a cofactor.

It catalyses the reaction 5-methyltetrahydropteroyltri-L-glutamate + L-homocysteine = tetrahydropteroyltri-L-glutamate + L-methionine. Its pathway is amino-acid biosynthesis; L-methionine biosynthesis via de novo pathway; L-methionine from L-homocysteine (MetE route): step 1/1. Catalyzes the transfer of a methyl group from 5-methyltetrahydrofolate to homocysteine resulting in methionine formation. The sequence is that of 5-methyltetrahydropteroyltriglutamate--homocysteine methyltransferase from Flavobacterium johnsoniae (strain ATCC 17061 / DSM 2064 / JCM 8514 / BCRC 14874 / CCUG 350202 / NBRC 14942 / NCIMB 11054 / UW101) (Cytophaga johnsonae).